A 477-amino-acid polypeptide reads, in one-letter code: Enolase 1, chloroplastic (477 aa).

Residues 1 to 41 (MALTTKPHHLQRSFLSPSRVSGERYLESAPSCLRFRRSGVQ) constitute a chloroplast transit peptide. Substrate-binding residues include His203 and Glu212. Glu255 serves as the catalytic Proton donor. Mg(2+) is bound by residues Asp290, Glu340, and Asp365. Substrate-binding residues include Glu340 and Asp365. The Proton acceptor role is filled by Lys390. Substrate-binding positions include 417 to 420 (SHRS) and Lys441. Position 476 is a phosphoserine (Ser476).

The protein belongs to the enolase family. Requires Mg(2+) as cofactor. In terms of tissue distribution, highly expressed in young roots, young siliques, and shoot apex. Lowly expressed in young leaves, stems and cotyledons.

It is found in the plastid. The protein resides in the chloroplast. It carries out the reaction (2R)-2-phosphoglycerate = phosphoenolpyruvate + H2O. Its pathway is carbohydrate degradation; glycolysis; pyruvate from D-glyceraldehyde 3-phosphate: step 4/5. The sequence is that of Enolase 1, chloroplastic (ENO1) from Arabidopsis thaliana (Mouse-ear cress).